The chain runs to 314 residues: Ribosomal protein L11 methyltransferase (314 aa).

S-adenosyl-L-methionine is bound by residues Thr-163, Gly-184, Asp-206, and Asn-248.

The protein belongs to the methyltransferase superfamily. PrmA family.

The protein resides in the cytoplasm. The enzyme catalyses L-lysyl-[protein] + 3 S-adenosyl-L-methionine = N(6),N(6),N(6)-trimethyl-L-lysyl-[protein] + 3 S-adenosyl-L-homocysteine + 3 H(+). Methylates ribosomal protein L11. This is Ribosomal protein L11 methyltransferase from Lactobacillus delbrueckii subsp. bulgaricus (strain ATCC BAA-365 / Lb-18).